The following is a 112-amino-acid chain: Peptidyl-tRNA hydrolase (112 aa).

This sequence belongs to the PTH2 family.

The protein localises to the cytoplasm. It carries out the reaction an N-acyl-L-alpha-aminoacyl-tRNA + H2O = an N-acyl-L-amino acid + a tRNA + H(+). In terms of biological role, the natural substrate for this enzyme may be peptidyl-tRNAs which drop off the ribosome during protein synthesis. The protein is Peptidyl-tRNA hydrolase of Haloquadratum walsbyi (strain DSM 16790 / HBSQ001).